The chain runs to 287 residues: uncharacterized protein (287 aa).

GTP-binding positions include 43–50 (GKTGAGKS), 90–93 (DLPG), and 156–159 (DKAE). The G domain occupies 48–140 (GKSSLCNALF…TDEHFYRQVI (93 aa)).

To E.coli YkfA and YeeP.

This is an uncharacterized protein from Escherichia coli (strain K12).